The chain runs to 491 residues: Fibrinogen beta chain (491 aa).

The first 30 residues, 1-30 (MKRMVSWSFHKLKTMKHLLLLLLCVFLVKS), serve as a signal peptide directing secretion. Q31 is modified (pyrrolidone carboxylic acid). The tract at residues 44 to 75 (RGHRPLDKKREEAPSLRPAPPPISGGGYRARP) is disordered. Residues 45–47 (GHR) are beta-chain polymerization, binding distal domain of another fibrin. Positions 47 to 57 (RPLDKKREEAP) are enriched in basic and acidic residues. Residues 157 to 222 (KRQKQVKDNE…ESDVSAQMEY (66 aa)) adopt a coiled-coil conformation. 2 disulfide bridges follow: C231–C316 and C241–C270. Residues 232–488 (NIPVVSGKEC…KMSMKIRPFF (257 aa)) enclose the Fibrinogen C-terminal domain. N-linked (GlcNAc...) asparagine glycosylation occurs at N394. A disulfide bridge links C424 with C437.

Heterohexamer; disulfide linked. Contains 2 sets of 3 non-identical chains (alpha, beta and gamma). The 2 heterotrimers are in head to head conformation with the N-termini in a small central domain. In terms of processing, conversion of fibrinogen to fibrin is triggered by thrombin, which cleaves fibrinopeptides A and B from alpha and beta chains, and thus exposes the N-terminal polymerization sites responsible for the formation of the soft clot. The soft clot is converted into the hard clot by factor XIIIA which catalyzes the epsilon-(gamma-glutamyl)lysine cross-linking between gamma chains (stronger) and between alpha chains (weaker) of different monomers. Detected in blood plasma (at protein level).

It is found in the secreted. Functionally, cleaved by the protease thrombin to yield monomers which, together with fibrinogen alpha (FGA) and fibrinogen gamma (FGG), polymerize to form an insoluble fibrin matrix. Fibrin has a major function in hemostasis as one of the primary components of blood clots. In addition, functions during the early stages of wound repair to stabilize the lesion and guide cell migration during re-epithelialization. Was originally thought to be essential for platelet aggregation, based on in vitro studies using anticoagulated blood. However subsequent studies have shown that it is not absolutely required for thrombus formation in vivo. Enhances expression of SELP in activated platelets. Maternal fibrinogen is essential for successful pregnancy. Fibrin deposition is also associated with infection, where it protects against IFNG-mediated hemorrhage. May also facilitate the antibacterial immune response via both innate and T-cell mediated pathways. The polypeptide is Fibrinogen beta chain (FGB) (Homo sapiens (Human)).